A 33-amino-acid chain; its full sequence is Cecropin-B (33 aa).

5-hydroxylysine is present on lysine 21.

As to quaternary structure, monomer. Hemolymph.

It localises to the secreted. Functionally, cecropins have lytic and antibacterial activity against several Gram-positive and Gram-negative bacteria. Also has activity against fungi. In Heliothis virescens (Tobacco budworm moth), this protein is Cecropin-B.